Consider the following 107-residue polypeptide: Nucleoid-associated protein BMEA_A0033 (107 aa).

This sequence belongs to the YbaB/EbfC family. As to quaternary structure, homodimer.

The protein localises to the cytoplasm. The protein resides in the nucleoid. In terms of biological role, binds to DNA and alters its conformation. May be involved in regulation of gene expression, nucleoid organization and DNA protection. The protein is Nucleoid-associated protein BMEA_A0033 of Brucella melitensis biotype 2 (strain ATCC 23457).